A 372-amino-acid polypeptide reads, in one-letter code: Homeobox protein Nkx-2.1 (372 aa).

Residues 161-220 (RRKRRVLFSQAQVYELERRFKQQKYLSAPEREHLASMIHLTPTQVKIWFQNHRYKMKRQA) constitute a DNA-binding region (homeobox). Disordered stretches follow at residues 219 to 258 (QAKD…SPRR), 269 to 288 (KPCQ…SHAQ), and 312 to 340 (AGLG…SPAG). The segment covering 233–244 (SGGGGGGGGGAG) has biased composition (gly residues). Low complexity predominate over residues 245–254 (CPQQQQAQQQ). Serine 255 carries the phosphoserine modification. Residues 273 to 288 (AGAPAPGAASLQSHAQ) are compositionally biased toward low complexity.

The protein belongs to the NK-2 homeobox family. As to quaternary structure, interacts with WWTR1. Post-translationally, phosphorylated on serine residues by STK3/MST2. Thyroid, lung and brain.

It is found in the nucleus. Transcription factor that binds and activates the promoter of thyroid specific genes such as thyroglobulin, thyroperoxidase, and thyrotropin receptor. Crucial in the maintenance of the thyroid differentiation phenotype. May play a role in lung development and surfactant homeostasis. Forms a regulatory loop with GRHL2 that coordinates lung epithelial cell morphogenesis and differentiation. Activates the transcription of GNRHR and plays a role in enhancing the circadian oscillation of its gene expression. Represses the transcription of the circadian transcriptional repressor NR1D1. The polypeptide is Homeobox protein Nkx-2.1 (Mus musculus (Mouse)).